The sequence spans 295 residues: MSKSNKLCRKTSCPRSNIFCNLLDKIVKRPSLQFLGQWGYHCYEPRIYRSLAKILRYVDLDGFDALLTDYIAFVEKSRYRFEVSFNLDFTEICVNTILYWVFARKGNPDFVELLLKKTKDYVQDRSCNLALIWRTFTPVYCPSPLSGITPLFYVAQTRQSNIFKILLQYGILEREKNPINIVLTIVLYPSRVRVMVDRELADIHEDAKTCLVLCSRVLSVISVKEIKTQLSLGRRPIISNWFDYIPSTRYKDPCELLHLCRLTIRNQLLTNNMLPDGIFSLLIPARLQNYLNLEI.

The ANK repeat unit spans residues 146–176 (SGITPLFYVAQTRQSNIFKILLQYGILEREK). In terms of domain architecture, SOCS box spans 232 to 295 (LGRRPIISNW…RLQNYLNLEI (64 aa)).

Belongs to the ankyrin SOCS box (ASB) family.

Its pathway is protein modification; protein ubiquitination. Its function is as follows. May be a substrate-recognition component of a SCF-like ECS (Elongin-Cullin-SOCS-box protein) E3 ubiquitin-protein ligase complex which mediates the ubiquitination and subsequent proteasomal degradation of target proteins. This is Ankyrin repeat and SOCS box protein 17 (ASB17) from Macaca fascicularis (Crab-eating macaque).